Reading from the N-terminus, the 431-residue chain is Nuclear receptor subfamily 1 group I member 2 (431 aa).

The segment at residues Leu35–Met104 is a DNA-binding region (nuclear receptor). 2 NR C4-type zinc fingers span residues Cys38 to Cys58 and Cys74 to Cys99. The Bipartite nuclear localization signal motif lies at Arg63 to Arg89. Residues Lys105–Glu142 are hinge. In terms of domain architecture, NR LBD spans Glu143–Asp430. Hyperforin contacts are provided by residues Ser244 and Ile282 to Phe285.

It belongs to the nuclear hormone receptor family. NR1 subfamily. In terms of assembly, heterodimer with RXRA. Interacts with NCOA1. Interacts (via domain NR LBD) with CRY1 and CRY2 in a ligand-dependent manner.

Its subcellular location is the nucleus. Its function is as follows. Nuclear receptor that binds and is activated by a variety of endogenous and xenobiotic compounds. Transcription factor that activates the transcription of multiple genes involved in the metabolism and secretion of potentially harmful xenobiotics, endogenous compounds and drugs. Response to specific ligands is species-specific, due to differences in the ligand-binding domain. Binds to a response element in the promoters of the CYP3A4 and ABCB1/MDR1 genes. Activated by naturally occurring steroids such as pregnenolone and progesterone, the cholesterol metabolite 5-beta-cholestane-3-alpha,7-alpha,12-alpha-triol, synthetic glucocorticoids and antiglucocorticoids and 16-alpha-carbonitrile (PCN). The polypeptide is Nuclear receptor subfamily 1 group I member 2 (Nr1i2) (Mus musculus (Mouse)).